The sequence spans 142 residues: Gonadotropin subunit beta-2 (142 aa).

Residues 1–23 form the signal peptide; that stretch reads MLGLHVGTLISLFLCILLEPIEG. Disulfide bonds link C29/C77, C43/C92, C46/C130, C54/C108, C58/C110, and C113/C120. N-linked (GlcNAc...) asparagine glycosylation is present at N33.

This sequence belongs to the glycoprotein hormones subunit beta family. As to quaternary structure, heterodimer of an alpha and a beta chain.

Its subcellular location is the secreted. Functionally, involved in gametogenesis and steroidogenesis. The polypeptide is Gonadotropin subunit beta-2 (cgbb) (Oncorhynchus tshawytscha (Chinook salmon)).